The chain runs to 138 residues: Small ribosomal subunit protein uS11 (138 aa).

Residues 1 to 12 are compositionally biased toward low complexity; the sequence is MAPKKPGAAGPK. 2 disordered regions span residues 1–27 and 119–138; these read MAPK…NVPH and ISDV…RRRV. Residues 13–22 are compositionally biased toward basic residues; it reads KAQKTRRREK.

Belongs to the universal ribosomal protein uS11 family. Part of the 30S ribosomal subunit. Interacts with proteins S7 and S18. Binds to IF-3.

In terms of biological role, located on the platform of the 30S subunit, it bridges several disparate RNA helices of the 16S rRNA. Forms part of the Shine-Dalgarno cleft in the 70S ribosome. In Mycobacteroides abscessus (strain ATCC 19977 / DSM 44196 / CCUG 20993 / CIP 104536 / JCM 13569 / NCTC 13031 / TMC 1543 / L948) (Mycobacterium abscessus), this protein is Small ribosomal subunit protein uS11.